The chain runs to 1928 residues: Lactase/phlorizin hydrolase (1928 aa).

The signal sequence occupies residues 1–21 (MELPWTALFLSTVLLGLSCQG). Positions 22 to 867 (SDWESDRNFI…LPVRADFTSR (846 aa)) are cleaved as a propeptide — XBetaGly. Residues 22 to 1883 (SDWESDRNFI…LMLGIAEAQT (1862 aa)) lie on the Extracellular side of the membrane. Residues 46–289 (NYPPGKQGSD…FIYTLKLEDC (244 aa)) are glycosyl hydrolase-1 1; Region I. The glycosyl hydrolase-1 2; Region II stretch occupies residues 364–856 (VWAAFANQSR…GFSAKKVKRN (493 aa)). N-linked (GlcNAc...) asparagine glycosylation is found at asparagine 370, asparagine 514, asparagine 824, asparagine 936, asparagine 948, asparagine 991, and asparagine 1037. Residues 904–1367 (RFRDDFLWGV…DLIANNGMPL (464 aa)) are glycosyl hydrolase-1 3; Region III. Phlorizin hydrolase/Glycosylceramidase activity. Catalysis depends on glutamate 1067, which acts as the Proton donor; for phlorizin hydrolase/Glycosylceramidase activity. Residues asparagine 1176 and asparagine 1240 are each glycosylated (N-linked (GlcNAc...) asparagine). Glutamate 1274 serves as the catalytic Nucleophile; for phlorizin hydrolase/Glycosylceramidase activity. N-linked (GlcNAc...) asparagine glycans are attached at residues asparagine 1281 and asparagine 1509. A glycosyl hydrolase-1 4; Region IV. Lactase activity region spans residues 1374–1847 (LYGEFPKGFI…CNGFPDPAQG (474 aa)). Residue glutamate 1539 is the Proton donor; for lactase activity of the active site. Residues asparagine 1657 and asparagine 1684 are each glycosylated (N-linked (GlcNAc...) asparagine). The active-site Nucleophile; for lactase activity is glutamate 1750. Residues asparagine 1762 and asparagine 1815 are each glycosylated (N-linked (GlcNAc...) asparagine). Residues 1884 to 1902 (ALYVLFALLLLGACSLAFL) form a helical membrane-spanning segment. Over 1903-1928 (TYNTGRRSKQGNAQPSQHQLSPISSF) the chain is Cytoplasmic.

This sequence belongs to the glycosyl hydrolase 1 family. Homodimer. N-glycosylated. Intestine.

Its subcellular location is the apical cell membrane. It carries out the reaction lactose + H2O = beta-D-galactose + D-glucose. The catalysed reaction is phlorizin + H2O = phloretin + beta-D-glucose. The enzyme catalyses D-cellobiose + H2O = beta-D-glucose + D-glucose. It catalyses the reaction quercetin 4'-O-beta-D-glucoside + H2O = quercetin + beta-D-glucose. It carries out the reaction quercetin 3-O-beta-D-glucoside + H2O = quercetin + beta-D-glucose. The catalysed reaction is kaempferol 3-O-beta-D-glucoside + H2O = kaempferol + beta-D-glucose. The enzyme catalyses luteolin 7-O-beta-D-glucoside + H2O = luteolin + beta-D-glucose. It catalyses the reaction luteolin 4'-O-beta-D-glucoside + H2O = luteolin + beta-D-glucose. It carries out the reaction (2S)-naringenin 7-O-beta-D-glucoside + H2O = (2S)-naringenin + beta-D-glucose. The catalysed reaction is eriodictyol-7-O-beta-D-glucoside + H2O = (S)-eriodictyol + beta-D-glucose. The enzyme catalyses apigenin 7-O-beta-D-glucoside + H2O = apigenin + beta-D-glucose. It catalyses the reaction daidzein 7-O-beta-D-glucoside + H2O = daidzein + beta-D-glucose + H(+). It carries out the reaction genistein 7-O-beta-D-glucoside + H2O = genistein + beta-D-glucose. The catalysed reaction is a beta-D-galactosyl-N-acylsphingosine + H2O = a ceramide + beta-D-galactose.. The enzyme catalyses beta-D-glucosyl-(1&lt;-&gt;1')-N-hexadecanoylsphing-4-enine + H2O = N-hexadecanoylsphing-4-enine + beta-D-glucose. It catalyses the reaction beta-D-galactosyl-(1&lt;-&gt;1')-N-hexadecanoylsphing-4-enine + H2O = beta-D-galactose + N-hexadecanoylsphing-4-enine. It carries out the reaction beta-D-galactosyl-(1&lt;-&gt;1')-N-hexadecanoylsphinganine + H2O = N-hexadecanoylsphinganine + beta-D-galactose. The catalysed reaction is beta-D-glucosyl-(1&lt;-&gt;1')-N-hexadecanoylsphinganine + H2O = N-hexadecanoylsphinganine + beta-D-glucose. Functionally, broad specificity glycosidase of the intestinal brush border membrane that hydrolyzes lactose, the main sugar in mammalian milk, to produce D-glucose and D-galactose. The mature protein is composed of two domains that catalyze the hydrolysis of beta-glucopyranosides and beta-galactopyranosides, with a preference for hydrophilic aglycones (in lactose and cellobiose) for one domain and hydrophobic aglycones (in phlorizin and glycosylceramides) for the other. The sequence is that of Lactase/phlorizin hydrolase from Rattus norvegicus (Rat).